We begin with the raw amino-acid sequence, 443 residues long: Protein king tubby (443 aa).

Disordered stretches follow at residues 57 to 85 and 98 to 189; these read TNGS…LSTI and HELE…ESEG. Positions 68 to 85 are enriched in polar residues; it reads AVNTSRNHSNNMRSLSTI. The segment covering 113–128 has biased composition (low complexity); sequence QHQQSASHSANSTQSQ. Phosphoserine is present on serine 136. A compositionally biased stretch (low complexity) spans 148–160; that stretch reads NRNVAAAAPVRPA. Residues 177–186 are compositionally biased toward gly residues; it reads NGTGNGTGGE.

This sequence belongs to the TUB family.

It is found in the cytoplasm. The protein resides in the nucleus. Its subcellular location is the cell projection. It localises to the cilium membrane. The protein localises to the rhabdomere. The protein is Protein king tubby of Drosophila yakuba (Fruit fly).